A 446-amino-acid polypeptide reads, in one-letter code: tRNA (guanine-N(7)-)-methyltransferase non-catalytic subunit TRM82 (446 aa).

The disordered stretch occupies residues 67 to 97; the sequence is LTQTSEDTEQENTAPYKKQKSSVSKPIKVPK. Residues 87–97 show a composition bias toward low complexity; the sequence is SSVSKPIKVPK. WD repeat units lie at residues 107–147, 202–243, and 247–287; these read PIYN…TENC, GHVS…IVKH, and GHRE…LLSK.

It belongs to the WD repeat TRM82 family. Forms a heterodimer with the catalytic subunit TRM8.

It is found in the nucleus. It participates in tRNA modification; N(7)-methylguanine-tRNA biosynthesis. Functionally, required for the formation of N(7)-methylguanine at position 46 (m7G46) in tRNA. In the complex, it is required to stabilize and induce conformational changes of the catalytic subunit. The sequence is that of tRNA (guanine-N(7)-)-methyltransferase non-catalytic subunit TRM82 from Debaryomyces hansenii (strain ATCC 36239 / CBS 767 / BCRC 21394 / JCM 1990 / NBRC 0083 / IGC 2968) (Yeast).